The chain runs to 201 residues: Oxalate oxidase 1 (201 aa).

An intrachain disulfide couples Cys10 to Cys26. A Cupin type-1 domain is found at 40-191 (SKLTKAGNTS…ALRVEAGVVE (152 aa)). The N-linked (GlcNAc...) asparagine glycan is linked to Asn47. 2 residues coordinate oxalate: Asn75 and Asn85. Mn(2+)-binding residues include His88, His90, Glu95, and His137. Oxalate contacts are provided by His90 and Glu95.

This sequence belongs to the germin family. In terms of assembly, homo hexamer; a trimer of dimers. In terms of processing, glycosylated. A form called G contains antennary GlcNAc residues, whereas a form called G' lacks antennary GlcNAc residues in its otherwise identical glycans.

It is found in the secreted. Its subcellular location is the extracellular space. It localises to the apoplast. The protein localises to the cell wall. The catalysed reaction is oxalate + O2 + 2 H(+) = H2O2 + 2 CO2. Its function is as follows. Releases hydrogen peroxide in the apoplast which may be important for cross-linking reactions in the cell wall biochemistry. May play an important role in several aspects of plant growth and defense mechanisms. This Hordeum vulgare (Barley) protein is Oxalate oxidase 1.